The following is a 498-amino-acid chain: Signal recognition particle receptor FtsY (498 aa).

Disordered regions lie at residues 1–130 (MGLF…PNQS) and 147–200 (KVES…YNRS). Low complexity predominate over residues 36–46 (ALLAETAETAE). A compositionally biased stretch (polar residues) spans 103-120 (SENSVAAVQNNTETMPSQ). GTP contacts are provided by residues 301–308 (GVNGVGKT), 383–387 (DTAGR), and 447–450 (TKID).

This sequence belongs to the GTP-binding SRP family. FtsY subfamily. Part of the signal recognition particle protein translocation system, which is composed of SRP and FtsY.

It localises to the cell membrane. Its subcellular location is the cytoplasm. It catalyses the reaction GTP + H2O = GDP + phosphate + H(+). In terms of biological role, involved in targeting and insertion of nascent membrane proteins into the cytoplasmic membrane. Acts as a receptor for the complex formed by the signal recognition particle (SRP) and the ribosome-nascent chain (RNC). The chain is Signal recognition particle receptor FtsY from Streptococcus mutans serotype c (strain ATCC 700610 / UA159).